Consider the following 324-residue polypeptide: Olfactory receptor 52I1 (324 aa).

Residues 1 to 29 (MLGPAYNHTMETPASFLLVGIPGLQSSHL) lie on the Extracellular side of the membrane. The N-linked (GlcNAc...) asparagine glycan is linked to Asn-7. Residues 30 to 50 (WLAISLSAMYITALLGNTLIV) traverse the membrane as a helical segment. Residues 51 to 58 (TAIWMDST) lie on the Cytoplasmic side of the membrane. A helical membrane pass occupies residues 59-79 (RHEPMYCFLCVLAAVDIVMAS). The Extracellular segment spans residues 80–103 (SVVPKMVSIFCSGDSSISFSACFT). A disulfide bridge links Cys-101 with Cys-193. A helical membrane pass occupies residues 104–124 (QMFFVHLATAVETGLLLTMAF). Residues 125 to 143 (DRYVAICKPLHYKRILTPQ) lie on the Cytoplasmic side of the membrane. A helical transmembrane segment spans residues 144–164 (VMLGMSMAVTIRAVTFMTPLS). Residues 165–200 (WMMNHLPFCGSNVVVHSYCKHIALARLACADPVPSS) lie on the Extracellular side of the membrane. The helical transmembrane segment at 201–221 (LYSLIGSSLMVGSDVAFIAAS) threads the bilayer. At 222–241 (YILILRAVFDLSSKTAQLKA) the chain is on the cytoplasmic side. The chain crosses the membrane as a helical span at residues 242-262 (LSTCGSHVGVMALYYLPGMAS). The Extracellular portion of the chain corresponds to 263–278 (IYAAWLGQDIVPLHTQ). A helical transmembrane segment spans residues 279–299 (VLLADLYVIIPATLNPIIYGM). The Cytoplasmic segment spans residues 300–324 (RTKQLLEGIWSYLMHFLFDHSNLGS).

It belongs to the G-protein coupled receptor 1 family.

It is found in the cell membrane. Functionally, odorant receptor. In Homo sapiens (Human), this protein is Olfactory receptor 52I1 (OR52I1).